We begin with the raw amino-acid sequence, 301 residues long: uncharacterized protein (301 aa).

The signal sequence occupies residues 1 to 21 (MKIKLILVLIVFLTIVNVNNS). Residues N19, N59, N102, and N180 are each glycosylated (N-linked (GlcNAc...) asparagine).

Its subcellular location is the secreted. This is an uncharacterized protein from Dictyostelium discoideum (Social amoeba).